A 366-amino-acid chain; its full sequence is UDP-N-acetylglucosamine--N-acetylmuramyl-(pentapeptide) pyrophosphoryl-undecaprenol N-acetylglucosamine transferase (366 aa).

UDP-N-acetyl-alpha-D-glucosamine-binding positions include 10 to 12 (TGG), asparagine 124, arginine 166, serine 196, and glutamine 297.

This sequence belongs to the glycosyltransferase 28 family. MurG subfamily.

It localises to the cell membrane. It carries out the reaction di-trans,octa-cis-undecaprenyl diphospho-N-acetyl-alpha-D-muramoyl-L-alanyl-D-glutamyl-meso-2,6-diaminopimeloyl-D-alanyl-D-alanine + UDP-N-acetyl-alpha-D-glucosamine = di-trans,octa-cis-undecaprenyl diphospho-[N-acetyl-alpha-D-glucosaminyl-(1-&gt;4)]-N-acetyl-alpha-D-muramoyl-L-alanyl-D-glutamyl-meso-2,6-diaminopimeloyl-D-alanyl-D-alanine + UDP + H(+). It participates in cell wall biogenesis; peptidoglycan biosynthesis. In terms of biological role, cell wall formation. Catalyzes the transfer of a GlcNAc subunit on undecaprenyl-pyrophosphoryl-MurNAc-pentapeptide (lipid intermediate I) to form undecaprenyl-pyrophosphoryl-MurNAc-(pentapeptide)GlcNAc (lipid intermediate II). The protein is UDP-N-acetylglucosamine--N-acetylmuramyl-(pentapeptide) pyrophosphoryl-undecaprenol N-acetylglucosamine transferase of Alkaliphilus metalliredigens (strain QYMF).